A 413-amino-acid chain; its full sequence is Putative ankyrin repeat protein L92 (413 aa).

ANK repeat units follow at residues 1 to 28 (MCAC…DINC), 32 to 67 (DGMS…DVNL), 68 to 104 (TVDG…LFES), 105 to 134 (DDDD…NIEA), 137 to 170 (DGET…KTNI), 174 to 208 (DRKT…NINY), 212 to 242 (IGET…NPNI), and 246 to 275 (SGNT…SPEI).

This is Putative ankyrin repeat protein L92 from Acanthamoeba polyphaga mimivirus (APMV).